The primary structure comprises 717 residues: DNA ligase (717 aa).

NAD(+) contacts are provided by residues 44–48 (DADYD), 93–94 (SL), and E127. K129 acts as the N6-AMP-lysine intermediate in catalysis. NAD(+)-binding residues include R150, E186, K302, and K326. Zn(2+) is bound by residues C431, C434, C455, and C461. The BRCT domain occupies 639–717 (ATDSPVAGKT…EDEWLALIGG (79 aa)).

Belongs to the NAD-dependent DNA ligase family. LigA subfamily. It depends on Mg(2+) as a cofactor. Mn(2+) serves as cofactor.

The catalysed reaction is NAD(+) + (deoxyribonucleotide)n-3'-hydroxyl + 5'-phospho-(deoxyribonucleotide)m = (deoxyribonucleotide)n+m + AMP + beta-nicotinamide D-nucleotide.. In terms of biological role, DNA ligase that catalyzes the formation of phosphodiester linkages between 5'-phosphoryl and 3'-hydroxyl groups in double-stranded DNA using NAD as a coenzyme and as the energy source for the reaction. It is essential for DNA replication and repair of damaged DNA. In Sinorhizobium medicae (strain WSM419) (Ensifer medicae), this protein is DNA ligase.